We begin with the raw amino-acid sequence, 306 residues long: Acetyl-coenzyme A carboxylase carboxyl transferase subunit beta (306 aa).

Residues 25 to 294 (LWIKDPTSGE…VVTPSPPSPT (270 aa)) enclose the CoA carboxyltransferase N-terminal domain. The interval 284-306 (AVVTPSPPSPTDSQTSLSKTKAA) is disordered.

This sequence belongs to the AccD/PCCB family. In terms of assembly, acetyl-CoA carboxylase is a heterohexamer composed of biotin carboxyl carrier protein (AccB), biotin carboxylase (AccC) and two subunits each of ACCase subunit alpha (AccA) and ACCase subunit beta (AccD).

Its subcellular location is the cytoplasm. The catalysed reaction is N(6)-carboxybiotinyl-L-lysyl-[protein] + acetyl-CoA = N(6)-biotinyl-L-lysyl-[protein] + malonyl-CoA. Its pathway is lipid metabolism; malonyl-CoA biosynthesis; malonyl-CoA from acetyl-CoA: step 1/1. Functionally, component of the acetyl coenzyme A carboxylase (ACC) complex. Biotin carboxylase (BC) catalyzes the carboxylation of biotin on its carrier protein (BCCP) and then the CO(2) group is transferred by the transcarboxylase to acetyl-CoA to form malonyl-CoA. The polypeptide is Acetyl-coenzyme A carboxylase carboxyl transferase subunit beta (Bartonella tribocorum (strain CIP 105476 / IBS 506)).